Reading from the N-terminus, the 1199-residue chain is Metabotropic glutamate receptor 1 (1199 aa).

An N-terminal signal peptide occupies residues 1–18 (MVRLLLIFFPMIFLEMSI). At 19–592 (LPRMPDRKVL…VRYLEWSDIE (574 aa)) the chain is on the extracellular side. Residues Cys-67 and Cys-109 are joined by a disulfide bond. L-glutamate is bound at residue Tyr-74. N-linked (GlcNAc...) asparagine glycosylation occurs at Asn-98. L-glutamate is bound by residues Ser-165 and 186 to 188 (SAT). Asn-223 carries an N-linked (GlcNAc...) asparagine glycan. Tyr-236 lines the L-glutamate pocket. Residues Cys-289 and Cys-291 are joined by a disulfide bond. Residue Asp-318 coordinates L-glutamate. Cys-378 and Cys-394 are oxidised to a cystine. An N-linked (GlcNAc...) asparagine glycan is attached at Asn-397. Lys-409 contacts L-glutamate. Cys-432 and Cys-439 are disulfide-bonded. Asn-515 is a glycosylation site (N-linked (GlcNAc...) asparagine). A helical membrane pass occupies residues 593–615 (SIIAIAFSCLGILVTLFVTLIFV). At 616-629 (LYRDTPVVKSSSRE) the chain is on the cytoplasmic side. The chain crosses the membrane as a helical span at residues 630–650 (LCYIILAGIFLGYVCPFTLIA). Topologically, residues 651–658 (KPTTTSCY) are extracellular. Cysteines 657 and 746 form a disulfide. Residues 659–680 (LQRLLVGLSSAMCYSALVTKTN) form a helical membrane-spanning segment. At 681–703 (RIARILAGSKKKICTRKPRFMSA) the chain is on the cytoplasmic side. Residues 704–727 (WAQVIIASILISVQLTLVVTLIIM) form a helical membrane-spanning segment. At 728–750 (EPPMPILSYPSIKEVYLICNTSN) the chain is on the extracellular side. Residues 751–772 (LGVVAPVGYNGLLIMSCTYYAF) traverse the membrane as a helical segment. At 773–785 (KTRNVPANFNEAK) the chain is on the cytoplasmic side. Residues 786 to 807 (YIAFTMYTTCIIWLAFVPIYFG) form a helical membrane-spanning segment. Over 808-815 (SNYKIITT) the chain is Extracellular. A helical membrane pass occupies residues 816-840 (CFAVSLSVTVALGCMFTPKMYIIIA). Over 841–1199 (KPERNVRSAF…RDYKQSSSTL (359 aa)) the chain is Cytoplasmic. Ser-853 is modified (phosphoserine). Residue Thr-871 is modified to Phosphothreonine. Disordered stretches follow at residues 882–905 (GAGNANSNGKSVSWSEPGGRQAPK), 959–1036 (EEDN…QPKS), and 1056–1081 (HAVLAGPGTPGNSLRSLYPPPPPPQH). Positions 885-895 (NANSNGKSVSW) are enriched in polar residues. Phosphoserine is present on residues Ser-894 and Ser-969. The segment covering 1012–1033 (GLPPPLPQQQPQQPPPQQPPQQ) has biased composition (pro residues). Phosphoserine is present on Ser-1098. Residues 1120–1177 (EREGNTEEDELEEEEDLPTASKLTPEDSPALTPPSPFRDSVASGSSVPSSPVSESVLC) are disordered. The span at 1125–1136 (TEEDELEEEEDL) shows a compositional bias: acidic residues. The residue at position 1147 (Ser-1147) is a Phosphoserine. At Thr-1151 the chain carries Phosphothreonine. Ser-1154 carries the phosphoserine modification. Over residues 1159–1175 (SVASGSSVPSSPVSESV) the composition is skewed to low complexity.

The protein belongs to the G-protein coupled receptor 3 family. As to quaternary structure, homodimer; disulfide-linked. The PPXXF motif binds HOMER1, HOMER2 and HOMER3. Interacts with TAMALIN. Interacts with RYR1, RYR2, ITPR1, SHANK1 and SHANK3. Interacts with SIAH1. Predominantly expressed in cerebellar Purkinje cells, CA2-CA3 pyramidal cells of the hippocampus, and mitral and tufted cells of the olfactory bulb.

The protein localises to the cell membrane. Its subcellular location is the postsynaptic cell membrane. It localises to the cell projection. The protein resides in the dendrite. Its function is as follows. G-protein coupled receptor for glutamate. Ligand binding causes a conformation change that triggers signaling via guanine nucleotide-binding proteins (G proteins) and modulates the activity of down-stream effectors. Signaling activates a phosphatidylinositol-calcium second messenger system. May participate in the central action of glutamate in the CNS, such as long-term potentiation in the hippocampus and long-term depression in the cerebellum. May function in the light response in the retina. Induces GRID1 and GRID2 cation-channel activation via GNAQ-PLC-PKC pathway in dopaminergic neurons and cerebellar Purkinje cell, respectively. This Rattus norvegicus (Rat) protein is Metabotropic glutamate receptor 1 (Grm1).